A 157-amino-acid chain; its full sequence is NudC domain-containing protein 2 (157 aa).

Residue Ser-2 is modified to N-acetylserine. Positions 14–104 (CGTPWGQWYQ…DAANCWTSLL (91 aa)) constitute a CS domain. The segment at 134–157 (FDFSGAEISGNYTKGGPDFSNLEK) is disordered. Ser-142 bears the Phosphoserine mark. Phosphotyrosine is present on Tyr-145.

As to quaternary structure, interacts with LIS1.

It is found in the chromosome. It localises to the centromere. The protein resides in the kinetochore. Its subcellular location is the cytoplasm. The protein localises to the cytoskeleton. It is found in the microtubule organizing center. It localises to the centrosome. The protein resides in the spindle pole. Functionally, may regulate the LIS1/dynein pathway by stabilizing LIS1 with Hsp90 chaperone. This is NudC domain-containing protein 2 (NUDCD2) from Homo sapiens (Human).